The primary structure comprises 221 residues: Iron-sulfur cluster repair protein YtfE (221 aa).

Belongs to the RIC family. YtfE subfamily. Homodimer.

Its subcellular location is the cytoplasm. Di-iron-containing protein involved in the repair of iron-sulfur clusters damaged by oxidative and nitrosative stress conditions. This is Iron-sulfur cluster repair protein YtfE from Edwardsiella ictaluri (strain 93-146).